The sequence spans 325 residues: Basic membrane protein A (325 aa).

The signal sequence occupies residues F1–S3. C4 carries N-palmitoyl cysteine lipidation. The S-diacylglycerol cysteine moiety is linked to residue C4.

The protein belongs to the BMP lipoprotein family. In terms of assembly, monomer.

The protein localises to the cell inner membrane. In terms of biological role, immunogenic protein. May be part of an ABC-type nucleoside uptake system involved in the purine salvage pathway. This chain is Basic membrane protein A (bmpA), found in Borreliella afzelii (Borrelia afzelii).